A 528-amino-acid polypeptide reads, in one-letter code: Drimenol cyclase drtB (528 aa).

The protein belongs to the HAD-like hydrolase superfamily.

The enzyme catalyses (2E,6E)-farnesyl diphosphate + H2O = (5S,9S,10S)-drim-7-en-11-ol + diphosphate. Its pathway is secondary metabolite biosynthesis; terpenoid biosynthesis. Its function is as follows. Drimenol cyclase; part of the gene cluster that mediates the biosynthesis of various drimane-type sesquiterpene esters, compounds that exhibit diverse biological activities and are widely present in eukaryotes. The pathway begins with the synthesis of the backbone drimenol by the terpene cyclase drtB using farnesyl pyrophosphate (FPP) as substrate. The cytochrome P450 monooxygenase drtD is then responsible for the hydroxylations at C-6, C-9 and C-12, as well as the oxidation of hydroxyl groups at C-6 and C-11 to a ketone and an aldehyde, respectively. Then, the biosynthesis can go in two directions, either the hydroxylated drimenol is further hydroxylated at C-2 and C-3 by an enzyme(s) not associated with the drt cluster, or the FAD-binding oxidoreductase drtC further oxidizes C-11 or C-12 to form the butyrolactone ring. DrtB, drtD and drtC are solely responsible for the formation of the different drimane structures observed during drimane sesquiterpenes biosynthesis. The polyketide synthase drtA synthesizes different lengths (C6 and C8) of PKS chains, which are then oxidized to varying degrees by the short-chain dehydrogenase drtF. Finally, these PKS chains are transferred onto drimane sesquiterpenes by the acyltransferase drtE, forming the sesquiterpene esters. In addition to the different fatty acyl-CoA chains produced by drtA, drtE is also able to use cinnamoyl-CoA as a substrate. This chain is Drimenol cyclase drtB, found in Aspergillus calidoustus.